The following is a 317-amino-acid chain: Protoheme IX farnesyltransferase (317 aa).

7 helical membrane passes run 33–53 (VMSL…GEIN), 54–74 (PILG…SGAL), 117–137 (VILG…TIFF), 154–174 (IVIG…CVTG), 181–201 (VILF…LALF), 242–262 (FFTG…SAIF), and 285–305 (MFAY…ADHF).

The protein belongs to the UbiA prenyltransferase family. Protoheme IX farnesyltransferase subfamily.

The protein localises to the cell inner membrane. The catalysed reaction is heme b + (2E,6E)-farnesyl diphosphate + H2O = Fe(II)-heme o + diphosphate. Its pathway is porphyrin-containing compound metabolism; heme O biosynthesis; heme O from protoheme: step 1/1. Its function is as follows. Converts heme B (protoheme IX) to heme O by substitution of the vinyl group on carbon 2 of heme B porphyrin ring with a hydroxyethyl farnesyl side group. The polypeptide is Protoheme IX farnesyltransferase (Agrobacterium fabrum (strain C58 / ATCC 33970) (Agrobacterium tumefaciens (strain C58))).